Consider the following 377-residue polypeptide: DNA replication and repair protein RecF (377 aa).

An ATP-binding site is contributed by 30 to 37 (GQNAQGKS).

This sequence belongs to the RecF family.

The protein resides in the cytoplasm. Functionally, the RecF protein is involved in DNA metabolism; it is required for DNA replication and normal SOS inducibility. RecF binds preferentially to single-stranded, linear DNA. It also seems to bind ATP. The protein is DNA replication and repair protein RecF of Cyanothece sp. (strain PCC 7425 / ATCC 29141).